The sequence spans 268 residues: Tryptophan synthase alpha chain (268 aa).

Residues Glu49 and Asp60 each act as proton acceptor in the active site.

The protein belongs to the TrpA family. In terms of assembly, tetramer of two alpha and two beta chains.

It catalyses the reaction (1S,2R)-1-C-(indol-3-yl)glycerol 3-phosphate + L-serine = D-glyceraldehyde 3-phosphate + L-tryptophan + H2O. The protein operates within amino-acid biosynthesis; L-tryptophan biosynthesis; L-tryptophan from chorismate: step 5/5. In terms of biological role, the alpha subunit is responsible for the aldol cleavage of indoleglycerol phosphate to indole and glyceraldehyde 3-phosphate. The protein is Tryptophan synthase alpha chain of Yersinia enterocolitica serotype O:8 / biotype 1B (strain NCTC 13174 / 8081).